The primary structure comprises 250 residues: DNA repair protein RecO (250 aa).

The protein belongs to the RecO family.

Involved in DNA repair and RecF pathway recombination. This chain is DNA repair protein RecO, found in Lactobacillus acidophilus (strain ATCC 700396 / NCK56 / N2 / NCFM).